Consider the following 191-residue polypeptide: Small ribosomal subunit protein uS11m (191 aa).

Positions 37 to 62 are disordered; sequence PRLEDSAARQNTEREAAPSRFSLYPP. A compositionally biased stretch (basic and acidic residues) spans 38-53; the sequence is RLEDSAARQNTEREAA.

Belongs to the universal ribosomal protein uS11 family. Component of the mitochondrial ribosome small subunit (28S) which comprises a 12S rRNA and about 30 distinct proteins.

It is found in the mitochondrion. The polypeptide is Small ribosomal subunit protein uS11m (Mrps11) (Mus musculus (Mouse)).